The primary structure comprises 344 residues: S-adenosylmethionine:tRNA ribosyltransferase-isomerase (344 aa).

This sequence belongs to the QueA family. As to quaternary structure, monomer.

The protein localises to the cytoplasm. The catalysed reaction is 7-aminomethyl-7-carbaguanosine(34) in tRNA + S-adenosyl-L-methionine = epoxyqueuosine(34) in tRNA + adenine + L-methionine + 2 H(+). It participates in tRNA modification; tRNA-queuosine biosynthesis. Its function is as follows. Transfers and isomerizes the ribose moiety from AdoMet to the 7-aminomethyl group of 7-deazaguanine (preQ1-tRNA) to give epoxyqueuosine (oQ-tRNA). This Nitrosococcus oceani (strain ATCC 19707 / BCRC 17464 / JCM 30415 / NCIMB 11848 / C-107) protein is S-adenosylmethionine:tRNA ribosyltransferase-isomerase.